The following is a 99-amino-acid chain: MRVYTIRDDRIVYLGEYELVPMPKLEDDIAAIKGSIIAYVLNSNYSSFIGALKDTKEMELIENLAYELHQNIDRTPTLTRYYYLLMKVYGMHGSILSQF.

This is an uncharacterized protein from Thermoproteus tenax virus 1 (strain KRA1) (TTV1).